The primary structure comprises 710 residues: Polyribonucleotide nucleotidyltransferase (710 aa).

D488 and D494 together coordinate Mg(2+). One can recognise a KH domain in the interval 555–614 (PRIETITIPTDKIRDVIGSGGKVIREIVETTGAKVDVNDDGVIKVSSSDGASIKAALDWI). In terms of domain architecture, S1 motif spans 624-692 (GQIYKGKVVK…DRGKVRLSMK (69 aa)).

This sequence belongs to the polyribonucleotide nucleotidyltransferase family. The cofactor is Mg(2+).

Its subcellular location is the cytoplasm. The enzyme catalyses RNA(n+1) + phosphate = RNA(n) + a ribonucleoside 5'-diphosphate. Its function is as follows. Involved in mRNA degradation. Catalyzes the phosphorolysis of single-stranded polyribonucleotides processively in the 3'- to 5'-direction. This is Polyribonucleotide nucleotidyltransferase from Maricaulis maris (strain MCS10) (Caulobacter maris).